Consider the following 189-residue polypeptide: Cell division protein SepF (189 aa).

Residues 25 to 70 (ESRVQQQAVKPSNSRPAQQEPVRDIKQPRLVSSSSQHVTNTPSSNE) are disordered. Polar residues-rich tracts occupy residues 27 to 41 (RVQQ…SRPA) and 54 to 70 (LVSS…SSNE).

It belongs to the SepF family. Homodimer. Interacts with FtsZ.

The protein localises to the cytoplasm. Functionally, cell division protein that is part of the divisome complex and is recruited early to the Z-ring. Probably stimulates Z-ring formation, perhaps through the cross-linking of FtsZ protofilaments. Its function overlaps with FtsA. The chain is Cell division protein SepF from Streptococcus gordonii (strain Challis / ATCC 35105 / BCRC 15272 / CH1 / DL1 / V288).